An 85-amino-acid polypeptide reads, in one-letter code: UPF0335 protein Oant_1161 (85 aa).

The protein belongs to the UPF0335 family.

This chain is UPF0335 protein Oant_1161, found in Brucella anthropi (strain ATCC 49188 / DSM 6882 / CCUG 24695 / JCM 21032 / LMG 3331 / NBRC 15819 / NCTC 12168 / Alc 37) (Ochrobactrum anthropi).